Here is an 880-residue protein sequence, read N- to C-terminus: Translation initiation factor IF-2 (880 aa).

7 stretches are compositionally biased toward basic and acidic residues: residues 34–43 (HMSSLDDKQV), 59–69 (TEKDSKNSSRK), 82–94 (RRRDNKNEHDNRH), 110–131 (NRRENEDKKTTSAKPAARDLLN), 167–181 (KKVENTRKPKEEKLE), 230–240 (QKEETKPTRKK), and 248–261 (EVPDYERERSEHSD). The interval 34-297 (HMSSLDDKQV…KERPLPETLV (264 aa)) is disordered. Residues 262–275 (KARRRRNKKNKRIN) are compositionally biased toward basic residues. Basic and acidic residues predominate over residues 276 to 292 (QSKEVKKQPTQRKERPL). The 170-residue stretch at 381–550 (KRPPVVTIMG…LLQADVMELK (170 aa)) folds into the tr-type G domain. The segment at 390-397 (GHVDHGKT) is G1. Residue 390 to 397 (GHVDHGKT) participates in GTP binding. The segment at 415 to 419 (GITQR) is G2. The interval 436 to 439 (DTPG) is G3. GTP-binding positions include 436–440 (DTPGH) and 490–493 (NKID). The G4 stretch occupies residues 490–493 (NKID). Residues 526–528 (SAK) are G5.

Belongs to the TRAFAC class translation factor GTPase superfamily. Classic translation factor GTPase family. IF-2 subfamily.

The protein localises to the cytoplasm. One of the essential components for the initiation of protein synthesis. Protects formylmethionyl-tRNA from spontaneous hydrolysis and promotes its binding to the 30S ribosomal subunits. Also involved in the hydrolysis of GTP during the formation of the 70S ribosomal complex. The polypeptide is Translation initiation factor IF-2 (Lactobacillus johnsonii (strain CNCM I-12250 / La1 / NCC 533)).